The chain runs to 238 residues: Ribonuclease PH (238 aa).

Phosphate is bound by residues Arg-86 and 124 to 126; that span reads GTR.

Belongs to the RNase PH family. In terms of assembly, homohexameric ring arranged as a trimer of dimers.

It carries out the reaction tRNA(n+1) + phosphate = tRNA(n) + a ribonucleoside 5'-diphosphate. Functionally, phosphorolytic 3'-5' exoribonuclease that plays an important role in tRNA 3'-end maturation. Removes nucleotide residues following the 3'-CCA terminus of tRNAs; can also add nucleotides to the ends of RNA molecules by using nucleoside diphosphates as substrates, but this may not be physiologically important. Probably plays a role in initiation of 16S rRNA degradation (leading to ribosome degradation) during starvation. The chain is Ribonuclease PH from Mannheimia haemolytica (Pasteurella haemolytica).